The sequence spans 508 residues: Photosystem II CP47 reaction center protein (508 aa).

6 helical membrane passes run 21-36 (AVHLMHTSLVSGWAGS), 101-115 (IILSGLLFMAAIWHW), 140-156 (GIHLLLSGILCFGFGAF), 203-218 (IAAGILGIIAGLFHLS), 237-252 (VLSSSIAAVFWAAFVV), and 457-472 (IFALLFFFGHIWHGAR).

This sequence belongs to the PsbB/PsbC family. PsbB subfamily. As to quaternary structure, PSII is composed of 1 copy each of membrane proteins PsbA, PsbB, PsbC, PsbD, PsbE, PsbF, PsbH, PsbI, PsbJ, PsbK, PsbL, PsbM, PsbT, PsbY, PsbZ, Psb30/Ycf12, at least 3 peripheral proteins of the oxygen-evolving complex and a large number of cofactors. It forms dimeric complexes. Requires Binds multiple chlorophylls. PSII binds additional chlorophylls, carotenoids and specific lipids. as cofactor.

The protein localises to the plastid. Its subcellular location is the chloroplast thylakoid membrane. One of the components of the core complex of photosystem II (PSII). It binds chlorophyll and helps catalyze the primary light-induced photochemical processes of PSII. PSII is a light-driven water:plastoquinone oxidoreductase, using light energy to abstract electrons from H(2)O, generating O(2) and a proton gradient subsequently used for ATP formation. This chain is Photosystem II CP47 reaction center protein, found in Bigelowiella natans (Pedinomonas minutissima).